The chain runs to 139 residues: uncharacterized protein (139 aa).

To S.typhimurium FliF.

May be involved in the assembly, structure, or function of the flagellum. May polymerize to form a filamentous structure that is part of the flagellum. This is an uncharacterized protein from Bacillus subtilis (strain 168).